Reading from the N-terminus, the 475-residue chain is MSQLDVLIVDDEESIRNLIAANLKDEGFNPKVAANSTQALKILSEKPVSAVILDIWLQGSEIDGLGILEIIKKRYPLMPVIIISGHGTIETAVNAIKMGAYDYIEKPFNNDKLVILLKRACEVTKLKRENIDLKSKVIDKTELVGGCSVTLKYKMEIEKAASSSSRIMIHGKVGSGKELAARLIHKQSKRVNNPFIIFSPTCMTTEKINQELFGESEKQENNTKRPTILEFANNGTLYIDEVSNIPIPIQVKLLKFLKDQTITKPCGKNIKVDIKIITGTSKNIQDEVNNGKFLEDLYYRLNVSSLKVPSLYERKEDIPLLVKYFVKQLSKFSGLKERNFADETIAALQSYEWPGNIRQLRNVVEWTLIMNPLTTGNNEIIKPYMIPSEILANSANLTKLEDSFDMLSMPLREAREVFERQYLSAQMSRFNNNISKTSSFVGMERSALHRKLKLLSLHIPPTNRINEEEYEEANA.

Residues 5 to 121 enclose the Response regulatory domain; that stretch reads DVLIVDDEES…KLVILLKRAC (117 aa). Asp-54 carries the 4-aspartylphosphate modification. The Sigma-54 factor interaction domain maps to 143 to 369; sequence LVGGCSVTLK…LRNVVEWTLI (227 aa). ATP-binding positions include 171–178 and 232–241; these read GKVGSGKE and ANNGTLYIDE.

Functionally, member of the two-component regulatory system RF_0895/RF_0427. This Rickettsia felis (strain ATCC VR-1525 / URRWXCal2) (Rickettsia azadi) protein is Putative response regulator NtrX-like.